The chain runs to 386 residues: ADP,ATP carrier protein 1, mitochondrial (386 aa).

Residues 1–76 constitute a mitochondrion transit peptide; sequence MDQVQHPSVM…PSTASAICVQ (76 aa). Solcar repeat units follow at residues 84-177, 189-281, and 289-375; these read SSFA…FKRL, KWFA…LKPV, and DSFF…LQLI. Transmembrane regions (helical) follow at residues 86-113, 154-178, 187-207, 257-278, and 292-312; these read FAID…VKLL, TANV…KRLF, YWKW…SSLL, FNIS…YDSL, and FASF…SYPI. ADP is bound by residues arginine 159 and lysine 171. Residue arginine 316 coordinates ADP. The interval 316–321 is important for transport activity; the sequence is RRRMMM. A Nucleotide carrier signature motif motif is present at residues 316-321; that stretch reads RRRMMM. The helical transmembrane segment at 352-372 threads the bilayer; the sequence is AGSNILRAIAGAGVLAGYDKL.

It belongs to the mitochondrial carrier (TC 2.A.29) family. Monomer.

The protein resides in the mitochondrion inner membrane. It carries out the reaction ADP(in) + ATP(out) = ADP(out) + ATP(in). With respect to regulation, the matrix-open state (m-state) is inhibited by the membrane-permeable bongkrekic acid (BKA). The cytoplasmic-open state (c-state) is inhibited by the membrane-impermeable toxic inhibitor carboxyatractyloside (CATR). ADP:ATP antiporter that mediates import of ADP into the mitochondrial matrix for ATP synthesis, and export of ATP out to fuel the cell. Cycles between the cytoplasmic-open state (c-state) and the matrix-open state (m-state): operates by the alternating access mechanism with a single substrate-binding site intermittently exposed to either the cytosolic (c-state) or matrix (m-state) side of the inner mitochondrial membrane. This Gossypium hirsutum (Upland cotton) protein is ADP,ATP carrier protein 1, mitochondrial (ANT1).